Here is a 464-residue protein sequence, read N- to C-terminus: Phospho-2-dehydro-3-deoxyheptonate aldolase AroG (464 aa).

C87 is a binding site for Mn(2+). Phosphoenolpyruvate contacts are provided by residues R126, 285–286 (ER), K308, and R339. Mn(2+) contacts are provided by H371, E413, and D443.

Belongs to the class-II DAHP synthase family. Homodimer. Probably interacts with MSMEG_5536. Mn(2+) is required as a cofactor. Co(2+) serves as cofactor. It depends on Cd(2+) as a cofactor.

The enzyme catalyses D-erythrose 4-phosphate + phosphoenolpyruvate + H2O = 7-phospho-2-dehydro-3-deoxy-D-arabino-heptonate + phosphate. It participates in metabolic intermediate biosynthesis; chorismate biosynthesis; chorismate from D-erythrose 4-phosphate and phosphoenolpyruvate: step 1/7. In terms of biological role, catalyzes an aldol-like condensation reaction between phosphoenolpyruvate (PEP) and D-erythrose 4-phosphate (E4P) to generate 3-deoxy-D-arabino-heptulosonate 7-phosphate (DAH7P) and inorganic phosphate. The protein is Phospho-2-dehydro-3-deoxyheptonate aldolase AroG (aroG) of Mycolicibacterium smegmatis (strain ATCC 700084 / mc(2)155) (Mycobacterium smegmatis).